The following is a 135-amino-acid chain: NAD(P)H-quinone oxidoreductase subunit 3 (135 aa).

Helical transmembrane passes span 15-35 (LMFV…AAAV), 79-99 (MFAL…PWAV), and 104-124 (LGLL…VALA).

This sequence belongs to the complex I subunit 3 family. NDH-1 can be composed of about 15 different subunits; different subcomplexes with different compositions have been identified which probably have different functions.

The protein resides in the cellular thylakoid membrane. It carries out the reaction a plastoquinone + NADH + (n+1) H(+)(in) = a plastoquinol + NAD(+) + n H(+)(out). The enzyme catalyses a plastoquinone + NADPH + (n+1) H(+)(in) = a plastoquinol + NADP(+) + n H(+)(out). Functionally, NDH-1 shuttles electrons from an unknown electron donor, via FMN and iron-sulfur (Fe-S) centers, to quinones in the respiratory and/or the photosynthetic chain. The immediate electron acceptor for the enzyme in this species is believed to be plastoquinone. Couples the redox reaction to proton translocation, and thus conserves the redox energy in a proton gradient. Cyanobacterial NDH-1 also plays a role in inorganic carbon-concentration. This is NAD(P)H-quinone oxidoreductase subunit 3 from Synechococcus sp. (strain CC9311).